Reading from the N-terminus, the 230-residue chain is Probable thioesterase YBR096W (230 aa).

It belongs to the lcsJ thioesterase family.

This chain is Probable thioesterase YBR096W, found in Saccharomyces cerevisiae (strain ATCC 204508 / S288c) (Baker's yeast).